A 276-amino-acid chain; its full sequence is Putative translation initiation factor eIF-2B subunit 2-like (276 aa).

This sequence belongs to the eIF-2B alpha/beta/delta subunits family. Complex of two different subunits.

In terms of biological role, catalyzes the exchange of initiation factor 2-bound GDP for GTP. The chain is Putative translation initiation factor eIF-2B subunit 2-like from Pyrococcus horikoshii (strain ATCC 700860 / DSM 12428 / JCM 9974 / NBRC 100139 / OT-3).